We begin with the raw amino-acid sequence, 276 residues long: Glutamate 5-kinase (276 aa).

Lysine 14 is a binding site for ATP. The substrate site is built by serine 54, aspartate 141, and asparagine 157. ATP contacts are provided by residues 177 to 178 (SD) and 219 to 225 (TGGMLTK).

Belongs to the glutamate 5-kinase family.

The protein resides in the cytoplasm. The enzyme catalyses L-glutamate + ATP = L-glutamyl 5-phosphate + ADP. It participates in amino-acid biosynthesis; L-proline biosynthesis; L-glutamate 5-semialdehyde from L-glutamate: step 1/2. Its function is as follows. Catalyzes the transfer of a phosphate group to glutamate to form L-glutamate 5-phosphate. The protein is Glutamate 5-kinase of Listeria monocytogenes serotype 4b (strain CLIP80459).